The chain runs to 68 residues: Large ribosomal subunit protein bL35 (68 aa).

This sequence belongs to the bacterial ribosomal protein bL35 family.

The sequence is that of Large ribosomal subunit protein bL35 from Rickettsia akari (strain Hartford).